The following is a 417-amino-acid chain: Serine/threonine-protein kinase PkaB (417 aa).

The region spanning 9-270 (YTAHQILGRG…ELSARLRELL (262 aa)) is the Protein kinase domain. Residues 15-23 (LGRGSAGTV) and K36 contribute to the ATP site. The active-site Proton acceptor is D130. 2 disordered regions span residues 279 to 371 (LDVD…RAAT) and 395 to 417 (LATG…PAAP). Over residues 280 to 293 (DVDEPDAEQPEDAP) the composition is skewed to acidic residues. Low complexity-rich tracts occupy residues 294–308 (DASA…STAE) and 349–368 (GTAR…ARNR). Polar residues predominate over residues 408–417 (DTRNSAPAAP).

Belongs to the protein kinase superfamily. Ser/Thr protein kinase family. In terms of processing, autophosphorylated mainly at Thr.

The enzyme catalyses L-seryl-[protein] + ATP = O-phospho-L-seryl-[protein] + ADP + H(+). The catalysed reaction is L-threonyl-[protein] + ATP = O-phospho-L-threonyl-[protein] + ADP + H(+). This chain is Serine/threonine-protein kinase PkaB (pkaB), found in Streptomyces coelicolor (strain ATCC BAA-471 / A3(2) / M145).